We begin with the raw amino-acid sequence, 180 residues long: UPF0227 protein YcfP (180 aa).

The protein belongs to the UPF0227 family.

The protein is UPF0227 protein YcfP of Salmonella agona (strain SL483).